The primary structure comprises 537 residues: MNRTQLLTLIATGLGLFMIFLDALIVNVALPDIQRSFAVGEDGLQWVVASYSLGMAVFIMSAATLADLDGRRRWYLIGVSLFTLGSIACGLAPSIAVLTTARGAQGLGAAAVSVTSLALVSAAFPEAKEKARAIGIWTAIASIGTTTGPTLGGLLVDQWGWRSIFYVNLPMGALVLFLTLCYVEESCNERARRFDLSGQLLFIVAVGALVYAVIEGPQIGWTSVQTIVMLWTAAVGCALFVWLERRSSNPMMDLTLFRDTSYALAIATICTVFFAVYGMLLLTTQFLQNVRGYTPSVTGLMILPFSAAVAIVSPLVGHLVGRIGARVPILAGLCMLMLGLLMLIFSEHRSSALVLVGLGLCGSGVALCLTPITTVAMTAVPAERAGMASGIMSAQRAIGSTIGFAVLGSVLAAWLSATLEPHLERAVPDPVQRHVLAEIIIDSANPRAHVGGIVPRRHIEHRDPVAIAEEDFIEGIRVALLVATATLAVVFLAGWRWFPRDVHTAGSDLSERLPTAMTVECAVSHMPGATWCRLWPA.

14 helical membrane passes run 6 to 26, 46 to 66, 77 to 97, 104 to 124, 136 to 156, 163 to 183, 200 to 220, 223 to 243, 262 to 282, 300 to 320, 327 to 347, 352 to 372, 397 to 417, and 478 to 498; these read LLTL…ALIV, WVVA…ATLA, IGVS…SIAV, AQGL…SAAF, IWTA…GLLV, SIFY…LCYV, LLFI…PQIG, SVQT…FVWL, YALA…MLLL, LMIL…GHLV, VPIL…IFSE, ALVL…LTPI, AIGS…WLSA, and VALL…WRWF.

It belongs to the major facilitator superfamily. EmrB family.

The protein localises to the cell membrane. Functionally, contributes to spectinomycin and tetracycline resistance. The sequence is that of Multidrug resistance protein Stp (stp) from Mycobacterium tuberculosis (strain ATCC 25618 / H37Rv).